We begin with the raw amino-acid sequence, 247 residues long: 1-(5-phosphoribosyl)-5-[(5-phosphoribosylamino)methylideneamino] imidazole-4-carboxamide isomerase (247 aa).

Catalysis depends on Asp-8, which acts as the Proton acceptor. The active-site Proton donor is the Asp-131.

The protein belongs to the HisA/HisF family.

It is found in the cytoplasm. It carries out the reaction 1-(5-phospho-beta-D-ribosyl)-5-[(5-phospho-beta-D-ribosylamino)methylideneamino]imidazole-4-carboxamide = 5-[(5-phospho-1-deoxy-D-ribulos-1-ylimino)methylamino]-1-(5-phospho-beta-D-ribosyl)imidazole-4-carboxamide. Its pathway is amino-acid biosynthesis; L-histidine biosynthesis; L-histidine from 5-phospho-alpha-D-ribose 1-diphosphate: step 4/9. This chain is 1-(5-phosphoribosyl)-5-[(5-phosphoribosylamino)methylideneamino] imidazole-4-carboxamide isomerase, found in Ralstonia pickettii (strain 12J).